Here is a 202-residue protein sequence, read N- to C-terminus: Orotate phosphoribosyltransferase (202 aa).

5-phospho-alpha-D-ribose 1-diphosphate contacts are provided by residues lysine 93 and 113-121 (EDIITTGGS). Threonine 117 and arginine 145 together coordinate orotate.

The protein belongs to the purine/pyrimidine phosphoribosyltransferase family. PyrE subfamily. As to quaternary structure, homodimer. It depends on Mg(2+) as a cofactor.

It carries out the reaction orotidine 5'-phosphate + diphosphate = orotate + 5-phospho-alpha-D-ribose 1-diphosphate. The protein operates within pyrimidine metabolism; UMP biosynthesis via de novo pathway; UMP from orotate: step 1/2. Functionally, catalyzes the transfer of a ribosyl phosphate group from 5-phosphoribose 1-diphosphate to orotate, leading to the formation of orotidine monophosphate (OMP). This chain is Orotate phosphoribosyltransferase, found in Campylobacter fetus subsp. fetus (strain 82-40).